A 369-amino-acid polypeptide reads, in one-letter code: Succinyl-diaminopimelate desuccinylase (369 aa).

Position 77 (H77) interacts with Zn(2+). The active site involves D79. Position 103 (D103) interacts with Zn(2+). E136 functions as the Proton acceptor in the catalytic mechanism. Positions 137, 165, and 345 each coordinate Zn(2+).

The protein belongs to the peptidase M20A family. Zn(2+) serves as cofactor. It depends on Co(2+) as a cofactor.

It catalyses the reaction N-succinyl-(2S,6S)-2,6-diaminopimelate + H2O = (2S,6S)-2,6-diaminopimelate + succinate. The protein operates within amino-acid biosynthesis; L-lysine biosynthesis via DAP pathway; LL-2,6-diaminopimelate from (S)-tetrahydrodipicolinate (succinylase route): step 3/3. The sequence is that of Succinyl-diaminopimelate desuccinylase (dapE) from Corynebacterium glutamicum (strain ATCC 13032 / DSM 20300 / JCM 1318 / BCRC 11384 / CCUG 27702 / LMG 3730 / NBRC 12168 / NCIMB 10025 / NRRL B-2784 / 534).